The primary structure comprises 84 residues: Keratin-associated protein 19-4 (84 aa).

Belongs to the KRTAP type 19 family. As to quaternary structure, interacts with hair keratins.

In the hair cortex, hair keratin intermediate filaments are embedded in an interfilamentous matrix, consisting of hair keratin-associated proteins (KRTAP), which are essential for the formation of a rigid and resistant hair shaft through their extensive disulfide bond cross-linking with abundant cysteine residues of hair keratins. The matrix proteins include the high-sulfur and high-glycine-tyrosine keratins. The protein is Keratin-associated protein 19-4 (KRTAP19-4) of Homo sapiens (Human).